A 215-amino-acid polypeptide reads, in one-letter code: Cytochrome b6 (215 aa).

Residues Ile-32–Phe-52 form a helical membrane-spanning segment. Cys-35 lines the heme c pocket. Heme b is bound by residues His-86 and His-100. 3 helical membrane passes run Ala-90–Phe-110, Leu-116–Tyr-136, and Leu-186–Ile-206. Heme b-binding residues include His-187 and His-202.

This sequence belongs to the cytochrome b family. PetB subfamily. As to quaternary structure, the 4 large subunits of the cytochrome b6-f complex are cytochrome b6, subunit IV (17 kDa polypeptide, PetD), cytochrome f and the Rieske protein, while the 4 small subunits are PetG, PetL, PetM and PetN. The complex functions as a dimer. Heme b serves as cofactor. Requires heme c as cofactor.

It is found in the plastid. Its subcellular location is the chloroplast thylakoid membrane. Functionally, component of the cytochrome b6-f complex, which mediates electron transfer between photosystem II (PSII) and photosystem I (PSI), cyclic electron flow around PSI, and state transitions. The chain is Cytochrome b6 from Morus indica (Mulberry).